The following is an 85-amino-acid chain: HssA/B-like protein 62 (85 aa).

It belongs to the hssA/B family.

The sequence is that of HssA/B-like protein 62 (hssl62) from Dictyostelium discoideum (Social amoeba).